Reading from the N-terminus, the 291-residue chain is Pituitary-specific positive transcription factor 1 (291 aa).

Residues 5 to 13 (PFTSTDTFI) carry the 9aaTAD motif. Positions 124 to 198 (MDSPEIRELE…ILFKWLEEAE (75 aa)) constitute a POU-specific domain. The segment at residues 214-273 (KRKRRTTISIAAKDALERHFGEQNKPSSQEILRMAEELNLEKEVVRVWFCNRRQREKRVK) is a DNA-binding region (homeobox).

It belongs to the POU transcription factor family. Class-1 subfamily. As to quaternary structure, interacts with PITX1. Interacts with LHX3. Interacts with ELK1.

It is found in the nucleus. Its function is as follows. Transcription factor involved in the specification of the lactotrope, somatotrope, and thyrotrope phenotypes in the developing anterior pituitary. Activates growth hormone and prolactin genes. Specifically binds to the consensus sequence 5'-TAAAT-3'. This is Pituitary-specific positive transcription factor 1 (POU1F1) from Ovis aries (Sheep).